Reading from the N-terminus, the 390-residue chain is Two-component response regulator ORR29 (390 aa).

The region spanning serine 13–aspartate 130 is the Response regulatory domain. The residue at position 65 (aspartate 65) is a 4-aspartylphosphate. A DNA-binding region (myb-like GARP) is located at residues lysine 169–lysine 226. Disordered regions lie at residues phenylalanine 233–glutamate 271 and serine 303–histidine 339. The span at asparagine 257 to glutamate 271 shows a compositional bias: polar residues.

The protein belongs to the ARR family. Type-B subfamily. Two-component system major event consists of a His-to-Asp phosphorelay between a sensor histidine kinase (HK) and a response regulator (RR). In plants, the His-to-Asp phosphorelay involves an additional intermediate named Histidine-containing phosphotransfer protein (HPt). This multistep phosphorelay consists of a His-Asp-His-Asp sequential transfer of a phosphate group between first a His and an Asp of the HK protein, followed by the transfer to a conserved His of the HPt protein and finally the transfer to an Asp in the receiver domain of the RR protein.

Its subcellular location is the nucleus. Transcriptional activator that binds specific DNA sequence. Functions as a response regulator involved in His-to-Asp phosphorelay signal transduction system. Phosphorylation of the Asp residue in the receiver domain activates the ability of the protein to promote the transcription of target genes. May directly activate some type-A response regulators in response to cytokinins. This is Two-component response regulator ORR29 from Oryza sativa subsp. indica (Rice).